Here is a 732-residue protein sequence, read N- to C-terminus: E3 ubiquitin-protein ligase DCST1 (732 aa).

The Cytoplasmic segment spans residues 1 to 46 (MAFLSSTLHSLGIFEKISRIKEVLKNRLLDLTKRRDQAREQQRKRP). The helical transmembrane segment at 47–67 (HTIIQGLLLWSLPVSWIRFLW) threads the bilayer. Residues 68-76 (RQPGEFPVT) are Extracellular-facing. A helical transmembrane segment spans residues 77–97 (AFLLGAGTGGLLAIGLFQLLV). The Cytoplasmic portion of the chain corresponds to 98–107 (NPMNIYEEQK). The chain crosses the membrane as a helical span at residues 108 to 128 (VVALYCLASLGAIGWGTSPHI). The Extracellular segment spans residues 129–394 (RCASLLLVPK…VRDYVRQQET (266 aa)). N-linked (GlcNAc...) asparagine glycans are attached at residues Asn-184, Asn-217, Asn-346, and Asn-374. Residues 395–415 (YLQWAMGLLHVLLSCTFLLVF) traverse the membrane as a helical segment. Over 416–489 (HSAFSYMDHY…RYVIRELLET (74 aa)) the chain is Cytoplasmic. A helical membrane pass occupies residues 490 to 510 (LPIVLLLLVLCAIDWALYSVF). Residues 511 to 576 (DTIRQHSFVQ…PQPISLNARD (66 aa)) are Extracellular-facing. Asn-551 carries an N-linked (GlcNAc...) asparagine glycan. The chain crosses the membrane as a helical span at residues 577 to 597 (YFKASLPTLLLVCLCLAQAFG). Topologically, residues 598–732 (YRLRRVIAAF…DSNDDAVYGD (135 aa)) are cytoplasmic. The segment at 672 to 711 (CVVCQAMETPDSYVCPTPDCKALYCRSCWDDMQRLCPVCT) adopts an RING-type; degenerate zinc-finger fold.

As to quaternary structure, interacts with STAT2; the interaction results in STAT2 'Lys-48'-linked ubiquitination leading to its proteasomal degradation. Interacts with DCST2. Expressed in testis.

The protein localises to the cell membrane. It is found in the cytoplasmic vesicle. The protein resides in the secretory vesicle. It localises to the acrosome membrane. The enzyme catalyses S-ubiquitinyl-[E2 ubiquitin-conjugating enzyme]-L-cysteine + [acceptor protein]-L-lysine = [E2 ubiquitin-conjugating enzyme]-L-cysteine + N(6)-ubiquitinyl-[acceptor protein]-L-lysine.. The protein operates within protein modification; protein ubiquitination. E3 ubiquitin-protein ligase which mediates 'Lys-48'-linked ubiquitination of STAT2 and induces its proteasomal degradation thereby negatively regulating type-I-interferon signaling. In terms of biological role, essential sperm cell-surface protein required for sperm-egg fusion and fertilization. The chain is E3 ubiquitin-protein ligase DCST1 (Dcst1) from Mus musculus (Mouse).